A 323-amino-acid polypeptide reads, in one-letter code: Beta-ketoacyl-[acyl-carrier-protein] synthase III (323 aa).

Active-site residues include C113 and H250. Residues 251 to 255 form an ACP-binding region; it reads QANKR. N280 is a catalytic residue.

Belongs to the thiolase-like superfamily. FabH family. Homodimer.

Its subcellular location is the cytoplasm. It catalyses the reaction malonyl-[ACP] + acetyl-CoA + H(+) = 3-oxobutanoyl-[ACP] + CO2 + CoA. The protein operates within lipid metabolism; fatty acid biosynthesis. Its function is as follows. Catalyzes the condensation reaction of fatty acid synthesis by the addition to an acyl acceptor of two carbons from malonyl-ACP. Catalyzes the first condensation reaction which initiates fatty acid synthesis and may therefore play a role in governing the total rate of fatty acid production. Possesses both acetoacetyl-ACP synthase and acetyl transacylase activities. Its substrate specificity determines the biosynthesis of branched-chain and/or straight-chain of fatty acids. This chain is Beta-ketoacyl-[acyl-carrier-protein] synthase III, found in Chelativorans sp. (strain BNC1).